A 918-amino-acid chain; its full sequence is Cap-specific mRNA (nucleoside-2'-O-)-methyltransferase 1 (918 aa).

A compositionally biased stretch (basic and acidic residues) spans 1-18; the sequence is MADRKSDEGEDEYQHKEQ. Disordered regions lie at residues 1–56 and 62–81; these read MADR…EERA and KRGY…EEEP. Over residues 19-30 the composition is skewed to polar residues; sequence MVTNRTSSFQPK. Residues 43–56 show a composition bias toward basic and acidic residues; the sequence is RAADRREEFMEERA. Acidic residues predominate over residues 68–80; the sequence is GDDEEDDFTAEEE. In terms of domain architecture, G-patch spans 86–132; that stretch reads PLTVAERLMAAMGHKAGEGLGKHGQGISEPIASSTQRGRTGLGHNAG. The RrmJ-type SAM-dependent 2'-O-MTase domain maps to 236-465; the sequence is FFQNRAAMKT…ERYITCKGLR (230 aa). S-adenosyl-L-methionine-binding residues include Gly-298 and Asp-379. Lys-419 (proton acceptor) is an active-site residue.

The enzyme catalyses a 5'-end (N(7)-methyl 5'-triphosphoguanosine)-ribonucleoside in mRNA + S-adenosyl-L-methionine = a 5'-end (N(7)-methyl 5'-triphosphoguanosine)-(2'-O-methyl-ribonucleoside) in mRNA + S-adenosyl-L-homocysteine + H(+). In terms of biological role, S-adenosyl-L-methionine-dependent methyltransferase that mediates mRNA cap1 2'-O-ribose methylation to the 5'-cap structure of mRNAs. Methylates the ribose of the first nucleotide of a m(7)GpppG-capped mRNA to produce m(7)GpppNmp (cap1). Cap1 modification is linked to higher levels of translation. This chain is Cap-specific mRNA (nucleoside-2'-O-)-methyltransferase 1, found in Caenorhabditis elegans.